A 269-amino-acid polypeptide reads, in one-letter code: Mitochondrial acidic protein mam33 (269 aa).

This sequence belongs to the MAM33 family.

The protein localises to the cytoplasm. Its subcellular location is the mitochondrion matrix. This Schizosaccharomyces pombe (strain 972 / ATCC 24843) (Fission yeast) protein is Mitochondrial acidic protein mam33.